The sequence spans 814 residues: Rho GTPase-activating protein 26 (814 aa).

The 256-residue stretch at 7–262 (EFSDCCLDSP…MKENPLEHKT (256 aa)) folds into the BAR domain. One can recognise a PH domain in the interval 265–369 (PYTMEGYLYV…WMEAMDGREP (105 aa)). Positions 383–568 (AQLDSIGFSI…ILIENHEKIF (186 aa)) constitute a Rho-GAP domain. Over residues 624 to 648 (LESVSSNPNSILNSSSSLQPNMNSS) the composition is skewed to low complexity. Residues 624 to 696 (LESVSSNPNS…MPTSSTSSDS (73 aa)) are disordered. The segment covering 662-672 (SLPPNPSPTSP) has biased composition (pro residues). Ser668 is subject to Phosphoserine. Thr670 bears the Phosphothreonine mark. Ser671 carries the phosphoserine modification. Residues 673 to 696 (LSPSWPMFSAPSSPMPTSSTSSDS) show a composition bias toward low complexity. An SH3 domain is found at 756–814 (TPFRKAKALYACKAEHDSELSFTAGTVFDNVHPSQEPGWLEGTLNGKTGLIPENYVEFL).

As to quaternary structure, interacts with NYAP1, NYAP2 and MYO16. Interacts with MICAL1 and WDR44. Binds to the C-terminus of PTK2/FAK1. (Microbial infection) Interacts with human parainfluenza virus type 2 proteins P and V. Phosphorylated in a PINK1-dependent fashion promoting retrograde mitochondrial trafficking and clustering.

The protein localises to the endosome membrane. It is found in the cytoplasm. Its subcellular location is the cell junction. The protein resides in the focal adhesion. It localises to the cytoskeleton. GTPase-activating protein for RHOA and CDC42. Facilitates mitochondrial quality control by promoting Parkin-mediated recruitment of autophagosomes to damaged mitochondria. Negatively regulates the growth of human parainfluenza virus type 2 by inhibiting hPIV-2-mediated RHOA activation via interaction with two of its viral proteins P and V. Functionally, associates with MICAL1 on the endosomal membrane to promote Rab8-Rab10-dependent tubule extension. After dissociation of MICAL1, recruits WDR44 which connects the endoplasmic reticulum (ER) with the endosomal tubule, thereby participating in the export of a subset of neosynthesized proteins. The chain is Rho GTPase-activating protein 26 (ARHGAP26) from Homo sapiens (Human).